Reading from the N-terminus, the 205-residue chain is HTH-type transcriptional repressor KstR2 (205 aa).

Positions 10 to 70 (ASRRDELLQL…EVLRDFLDWL (61 aa)) constitute an HTH tetR-type domain. Residues 33-52 (TVRDIADSAGILSGSLYHHF) constitute a DNA-binding region (H-T-H motif).

Homodimer.

Its function is as follows. Controls the expression of a small regulon that may play a role in the utilization of cholesterol. This chain is HTH-type transcriptional repressor KstR2 (kstR2), found in Mycolicibacterium smegmatis (strain ATCC 700084 / mc(2)155) (Mycobacterium smegmatis).